The sequence spans 266 residues: Protein crossbronx-like (266 aa).

The region spanning 15 to 178 (KQGYHILAEY…VQEQAIASRN (164 aa)) is the UBC core domain.

The protein belongs to the ubiquitin-conjugating enzyme family. FTS subfamily.

In Drosophila yakuba (Fruit fly), this protein is Protein crossbronx-like.